The chain runs to 270 residues: Cell surface glycoprotein CD200 receptor 5 (270 aa).

Residues 1–25 (MHALGRTPALTLLIFINIFVSGSRC) form the signal peptide. The Extracellular portion of the chain corresponds to 26-241 (TDKNQTIQND…STTTTTSLLT (216 aa)). Residues 39-145 (PLTQVNTTVS…GNFGRVYDLQ (107 aa)) form the Ig-like V-type domain. An N-linked (GlcNAc...) asparagine glycan is attached at Asn44. Intrachain disulfides connect Cys59–Cys129 and Cys164–Cys213. The Ig-like C2-type domain occupies 134-229 (PEGNFGRVYD…GNKSLFIELN (96 aa)). N-linked (GlcNAc...) asparagine glycans are attached at residues Asn192 and Asn221. The helical transmembrane segment at 242–262 (ILYVKMVLLGIILLHVGFAFF) threads the bilayer. At 263-270 (QKRNVIRT) the chain is on the cytoplasmic side.

The protein belongs to the CD200R family.

It localises to the membrane. May not be a receptor for the CD200/OX2 cell surface glycoprotein. This chain is Cell surface glycoprotein CD200 receptor 5 (Cd200r5), found in Mus musculus (Mouse).